Here is a 676-residue protein sequence, read N- to C-terminus: MKKIYQWAVGQSFKKLDPRQQVKNPVMFVVYLGALITTILCFYPMGIPLWFNISITIFLWLTLLFANFAEAVAEGRGKAQADSLKQAKKEVMTYKINSLEDIKEENFIELQSSDLKRNDLVYVRAGEQIPADGDVIEGAASVDESAITGESAPVIRESGGDRSAVTGGTTVVSDYLVIRVTSENGQSFLDKMIAMVEGTQRKKTPNEIGLQIFLITLTIIFLTVSITLVPFTDFSSQLSGKGEALSLVIVIALLICLAPTTIGALISSIGIAGMSRLTKENVIAMSGRAIEAAGDVDVLLLDKTGTITLGNRRASDFLPVHGVSEEQLADAAQLSSLADETAEGRSIVILAKERFNLREREFQQSEVKFIDFSAKTRMSGIDYRGDVIRKGAADTMKKYVQSKGEDYPSECDKIVDKIARAGGTPLVVIKNNRVMGVVYLKDIVKNGVKEKFADMRKMGIKTIMITGDNPLTAAAIAAEAGVDDFLAEATPENKMNLIREYQEKGHLVAMTGDGTNDAPALAQADVAMAMNTGTQAAKEAGNMIDLDSSPTKLLQVVQIGKQLLMTRGALTTFSIANDIAKYFAVIPVLFYSIYPQLDRLNIMGLGSPLTAILSAVIYNAVVIVALIPLALKGVRYQEKPASQILSHNLLIYGLGGIIAPFIFIKIIDLILSLIIL.

Helical transmembrane passes span 24-44 (NPVM…CFYP), 45-65 (MGIP…TLLF), 212-232 (IFLI…VPFT), and 246-266 (SLVI…GALI). D302 (4-aspartylphosphate intermediate) is an active-site residue. ATP contacts are provided by residues D339, E343, 372–379 (FSAKTRMS), and K390. Residues D513 and D517 each contribute to the Mg(2+) site. Transmembrane regions (helical) follow at residues 573–593 (FSIA…FYSI), 611–631 (AILS…PLAL), and 656–676 (GIIA…LIIL).

Belongs to the cation transport ATPase (P-type) (TC 3.A.3) family. Type IA subfamily. In terms of assembly, the system is composed of three essential subunits: KdpA, KdpB and KdpC.

The protein localises to the cell membrane. It carries out the reaction K(+)(out) + ATP + H2O = K(+)(in) + ADP + phosphate + H(+). Part of the high-affinity ATP-driven potassium transport (or Kdp) system, which catalyzes the hydrolysis of ATP coupled with the electrogenic transport of potassium into the cytoplasm. This subunit is responsible for energy coupling to the transport system and for the release of the potassium ions to the cytoplasm. The protein is Potassium-transporting ATPase ATP-binding subunit of Enterococcus faecalis (strain ATCC 700802 / V583).